We begin with the raw amino-acid sequence, 623 residues long: Chaperone protein HtpG (623 aa).

The interval 1–336 is a; substrate-binding; it reads MVSKQQTMGF…ASDLPLNISR (336 aa). Residues 337-550 form a b region; it reads EILQDNKQVE…EQDMGLEMQR (214 aa). Residues 551–623 are c; it reads ILQAAGQQIP…NRVNRLLVSS (73 aa).

This sequence belongs to the heat shock protein 90 family. As to quaternary structure, homodimer.

The protein resides in the cytoplasm. In terms of biological role, molecular chaperone. Has ATPase activity. The chain is Chaperone protein HtpG from Legionella pneumophila (strain Lens).